The sequence spans 391 residues: GATA-binding factor 6-A (391 aa).

A disordered region spans residues 57 to 111 (GAHSVNSHWSQATSESSSFNNSSPHTSSRYHYPPSPPMHNGSTRDTGYSSSLTVS). Low complexity predominate over residues 66-83 (SQATSESSSFNNSSPHTS). Positions 96–111 (NGSTRDTGYSSSLTVS) are enriched in polar residues. 2 consecutive GATA-type zinc fingers follow at residues 182–206 (CVNC…CNAC) and 236–260 (CANC…CNAC). The interval 274 to 355 (AMKKEGIQTR…TESTSPNSNT (82 aa)) is disordered. The span at 282–291 (TRKRKPKTLN) shows a compositional bias: basic residues. Residues 292 to 319 (KSKSSSSNGNSSHQISMTPTSTTSSTNS) are compositionally biased toward low complexity. The segment covering 326-355 (GSPSQNTTPVVASSLMSTQQTESTSPNSNT) has biased composition (polar residues).

As to expression, in embryos, expressed in the presumptive heart mesoderm. In adults, expressed at high levels in heart, small intestine, and stomach and at lower levels in lung, pancreas and colon.

Its subcellular location is the nucleus. In terms of biological role, transcriptional activator that binds 5'-GATA-3'-containing motifs within gene promoters. Regulates cardiac-specific transcription during embryogenesis and thereby cardiogenesis. The sequence is that of GATA-binding factor 6-A (gata6-a) from Xenopus laevis (African clawed frog).